The following is a 418-amino-acid chain: Gamma-glutamyl phosphate reductase (418 aa).

The protein belongs to the gamma-glutamyl phosphate reductase family.

Its subcellular location is the cytoplasm. It carries out the reaction L-glutamate 5-semialdehyde + phosphate + NADP(+) = L-glutamyl 5-phosphate + NADPH + H(+). It functions in the pathway amino-acid biosynthesis; L-proline biosynthesis; L-glutamate 5-semialdehyde from L-glutamate: step 2/2. Its function is as follows. Catalyzes the NADPH-dependent reduction of L-glutamate 5-phosphate into L-glutamate 5-semialdehyde and phosphate. The product spontaneously undergoes cyclization to form 1-pyrroline-5-carboxylate. This chain is Gamma-glutamyl phosphate reductase, found in Chlorobium limicola (strain DSM 245 / NBRC 103803 / 6330).